Here is a 182-residue protein sequence, read N- to C-terminus: ADP-ribosylation factor-like protein 3 (182 aa).

Gly2 carries the N-myristoyl glycine lipid modification. At Ser5 the chain carries Phosphoserine. Residues 24–31, Thr48, 67–71, Gly70, 126–129, and 159–161 contribute to the GTP site; these read GLDNAGKT, DIGGQ, NKQD, and SAL. Mg(2+)-binding residues include Thr31 and Thr48.

The protein belongs to the small GTPase superfamily. Arf family. Found in a complex with ARL3, RP2 and UNC119 (or UNC119B); RP2 induces hydrolysis of GTP ARL3 in the complex, leading to the release of UNC119 (or UNC119B). Interacts with RP2; interaction is direct and stimulated with the activated GTP-bound form of ARL3. Interacts with SYS1. Interacts with ARL2BP; the GTP-bound form interacts with ARL2BP. Microtubule-associated protein. Does not interact with TBCC. Interacts with RP2. Interacts with PDE6D; the interaction occurs specifically with the GTP-bound form of ARL3. Interacts with GGA1; the interaction recruits PKD1:PKD2 complex to trans-Golgi network and is required for ciliary targeting of PKD1:PKD2 complex. Interacts with DNAAF9.

It localises to the golgi apparatus membrane. The protein localises to the cytoplasm. It is found in the cytoskeleton. Its subcellular location is the spindle. The protein resides in the nucleus. It localises to the microtubule organizing center. The protein localises to the centrosome. It is found in the cell projection. Its subcellular location is the cilium. In terms of biological role, small GTP-binding protein which cycles between an inactive GDP-bound and an active GTP-bound form, and the rate of cycling is regulated by guanine nucleotide exchange factors (GEF) and GTPase-activating proteins (GAP). Required for normal cytokinesis and cilia signaling. Requires assistance from GTPase-activating proteins (GAPs) like RP2 and PDE6D, in order to cycle between inactive GDP-bound and active GTP-bound forms. Required for targeting proteins to the cilium, including myristoylated NPHP3 and prenylated INPP5E. Targets NPHP3 to the ciliary membrane by releasing myristoylated NPHP3 from UNC119B cargo adapter into the cilium. Required for PKD1:PKD2 complex targeting from the trans-Golgi network to the cilium. The chain is ADP-ribosylation factor-like protein 3 (ARL3) from Sus scrofa (Pig).